We begin with the raw amino-acid sequence, 231 residues long: Superoxide dismutase [Mn] 1, mitochondrial (231 aa).

The N-terminal 29 residues, 1-29 (MAIRCVASRKTLAGLKETSSRLLRIRGIQ), are a transit peptide targeting the mitochondrion. Residues His-55 and His-103 each contribute to the Mn(2+) site. At Ser-124 the chain carries Phosphoserine. Residues Asp-192 and His-196 each coordinate Mn(2+).

It belongs to the iron/manganese superoxide dismutase family. As to quaternary structure, homotetramer. Mn(2+) is required as a cofactor.

The protein localises to the mitochondrion matrix. It carries out the reaction 2 superoxide + 2 H(+) = H2O2 + O2. Activated by MTM1. Its function is as follows. Destroys superoxide anion radicals which are normally produced within the cells and which are toxic to biological systems. The protein is Superoxide dismutase [Mn] 1, mitochondrial (MSD1) of Arabidopsis thaliana (Mouse-ear cress).